Reading from the N-terminus, the 307-residue chain is MAESNADVYASFGVNSAVMSGGSVEEHEQNMLALDVAARDGDDAIELASDEVETERDLYDNSDPFGQEDDEGRIQVRIGDGSEPTDVDTGEEGVEGTEGSEEFTPLGETPEELVAASEQLGEHEEGFQEMINIAAERGMSVETIEAIQREYEENEELSAESYAKLAEIGYTKAFIDSYIRGQEALVEQYVNSVIEYAGGRERFDALYNHLETHNPEAAQSLDNALTNRDLATVKAIINLAGESRAKAFGRKPTRSVTNRAIPAKPQATKREGFADRSEMIKAMSDPRYRTDANYRRQVEQKVIDSNF.

Composition is skewed to acidic residues over residues 45–54 and 83–101; these read IELASDEVET and EPTD…EGSE. The segment at 45–105 is disordered; that stretch reads IELASDEVET…GTEGSEEFTP (61 aa).

The protein belongs to the T7likevirus capsid assembly scaffolding protein family.

Its function is as follows. Scaffolding protein involved in the icosahedric procapsid assembly. Coassembles with the capsid proteins to form the procapsid, in which the scaffolding protein is found within the external shell of icosahedrally arranged capsid protein subunits. In a subsequent step the scaffolding protein molecules are released from the procapsid. Facilitates assembly by binding to gp10 hexamers but not the pentamers and locking them into a morphogenically correct conformation. This Escherichia coli (Bacteriophage T7) protein is Capsid assembly scaffolding protein.